A 291-amino-acid chain; its full sequence is RPE-retinal G protein-coupled receptor (291 aa).

At 1–15 (MAATRALPAGLGELE) the chain is on the extracellular side. Residues 16-36 (VLAVGTVLLMEALSGISLNGL) form a helical membrane-spanning segment. Residues 37–52 (TIFSFCKTPDLRTPSN) lie on the Cytoplasmic side of the membrane. Residues 53 to 73 (LLVLSLALADTGISLNALVAA) form a helical membrane-spanning segment. At 74–91 (VSSLLRRWPHGSEGCQVH) the chain is on the extracellular side. A disulfide bond links Cys-88 and Cys-162. A helical membrane pass occupies residues 92 to 112 (GFQGFATALASICGSAAVAWG). Residues 113–130 (RYHHYCTRRQLAWDTAIP) are Cytoplasmic-facing. A helical membrane pass occupies residues 131-151 (LVLFVWMSSAFWASLPLMGWG). Residues 152 to 175 (HYDYEPVGTCCTLDYSRGDRNFIS) lie on the Extracellular side of the membrane. The chain crosses the membrane as a helical span at residues 176–196 (FLFTMAFFNFLVPLFITHTSY). Topologically, residues 197-219 (RFMEQKFSRSGHLPVNTTLPGRM) are cytoplasmic. A helical membrane pass occupies residues 220–240 (LLLGWGPYALLYLYAAIADVS). The Extracellular segment spans residues 241–247 (FISPKLQ). A helical transmembrane segment spans residues 248-268 (MVPALIAKTMPTINAINYALH). Lys-255 bears the N6-(retinylidene)lysine mark. Residues 269 to 291 (REMVCRGTWQCLSPQKSKKDRTQ) are Cytoplasmic-facing.

Belongs to the G-protein coupled receptor 1 family. Opsin subfamily. Post-translationally, covalently binds all-trans- and 11-cis-retinal.

Its subcellular location is the membrane. In terms of biological role, receptor for all-trans- and 11-cis-retinal. Binds preferentially to the former and may catalyze the isomerization of the chromophore by a retinochrome-like mechanism. The sequence is that of RPE-retinal G protein-coupled receptor (Rgr) from Mus musculus (Mouse).